A 129-amino-acid chain; its full sequence is MAKEPARVKKRERKNITSGVAHVNASFNNTMITITDAQGNTISWSSAGAMGFKGSRKSTPYAAQMAAEDAGKKAAEHGVKTLEVNVSGPGSGRESALRALQAAGMTITTIRDVTPIPHNGCRPPKRRRV.

It belongs to the universal ribosomal protein uS11 family. In terms of assembly, part of the 30S ribosomal subunit. Interacts with proteins S7 and S18. Binds to IF-3.

Located on the platform of the 30S subunit, it bridges several disparate RNA helices of the 16S rRNA. Forms part of the Shine-Dalgarno cleft in the 70S ribosome. The protein is Small ribosomal subunit protein uS11 of Caulobacter sp. (strain K31).